Consider the following 246-residue polypeptide: UDP-N-acetyl-D-mannosaminuronic acid transferase (246 aa).

Belongs to the glycosyltransferase 26 family.

It carries out the reaction UDP-N-acetyl-alpha-D-mannosaminouronate + N-acetyl-alpha-D-glucosaminyl-di-trans,octa-cis-undecaprenyl diphosphate = beta-D-ManNAcA-(1-&gt;4)-alpha-D-GlcNAc-di-trans,octa-cis-undecaprenyl diphosphate + UDP + H(+). Its pathway is bacterial outer membrane biogenesis; enterobacterial common antigen biosynthesis. Catalyzes the synthesis of Und-PP-GlcNAc-ManNAcA (Lipid II), the second lipid-linked intermediate involved in enterobacterial common antigen (ECA) synthesis. The sequence is that of UDP-N-acetyl-D-mannosaminuronic acid transferase from Yersinia pseudotuberculosis serotype IB (strain PB1/+).